The sequence spans 655 residues: p-hydroxybenzoic acid efflux pump subunit AaeB (655 aa).

11 consecutive transmembrane segments (helical) span residues 13–33, 38–58, 69–89, 93–113, 121–141, 152–172, 370–390, 407–427, 431–451, 459–479, and 482–502; these read FAVKLACAIVLALFVGFHFQL, WAVLTAAIVAAGPAFAAGGEP, LRIIGTFIGCIAALTIIITMI, LLMILVCCIWAGFCTWISSLV, WGLSGYTALIIVITIQAEPLL, EIVIGIVCAIMADLLFSPRSV, LFWLWTGWTSGSGAMVMIAVV, FIYGTLAALPLGLLYFLVIIP, QSMLLLCLSLAVLGFFLGIEV, MGALASTINIIVLDNPMTFHF, and FLDSALGQIVGCMMAFIVILL.

The protein belongs to the aromatic acid exporter ArAE (TC 2.A.85) family.

The protein localises to the cell inner membrane. In terms of biological role, forms an efflux pump with AaeA. Could function as a metabolic relief valve, allowing to eliminate certain compounds when they accumulate to high levels in the cell. This is p-hydroxybenzoic acid efflux pump subunit AaeB from Citrobacter koseri (strain ATCC BAA-895 / CDC 4225-83 / SGSC4696).